Consider the following 78-residue polypeptide: MKNGIHPEYKKLLIKVGSNIFETMSTHPIGEILMDVDFRKHPAWNKDSGNVVNQSNKSVSDFNKRFSGLSFDSKKEAS.

This sequence belongs to the bacterial ribosomal protein bL31 family. Type A subfamily. In terms of assembly, part of the 50S ribosomal subunit.

Functionally, binds the 23S rRNA. This is Large ribosomal subunit protein bL31 (rpmE) from Rickettsia typhi (strain ATCC VR-144 / Wilmington).